Reading from the N-terminus, the 246-residue chain is Carboxy-S-adenosyl-L-methionine synthase (246 aa).

S-adenosyl-L-methionine is bound by residues Tyr39, 64–66 (GCS), 89–90 (DN), 117–118 (DI), Asn132, and Arg199.

Belongs to the class I-like SAM-binding methyltransferase superfamily. Cx-SAM synthase family. Homodimer.

The catalysed reaction is prephenate + S-adenosyl-L-methionine = carboxy-S-adenosyl-L-methionine + 3-phenylpyruvate + H2O. Catalyzes the conversion of S-adenosyl-L-methionine (SAM) to carboxy-S-adenosyl-L-methionine (Cx-SAM). In Enterobacter sp. (strain 638), this protein is Carboxy-S-adenosyl-L-methionine synthase.